Consider the following 275-residue polypeptide: Ribosomal RNA small subunit methyltransferase A (275 aa).

S-adenosyl-L-methionine is bound by residues Asn-21, Leu-23, Gly-48, Glu-69, Asp-94, and Asn-115.

Belongs to the class I-like SAM-binding methyltransferase superfamily. rRNA adenine N(6)-methyltransferase family. RsmA subfamily.

It localises to the cytoplasm. It catalyses the reaction adenosine(1518)/adenosine(1519) in 16S rRNA + 4 S-adenosyl-L-methionine = N(6)-dimethyladenosine(1518)/N(6)-dimethyladenosine(1519) in 16S rRNA + 4 S-adenosyl-L-homocysteine + 4 H(+). Its function is as follows. Specifically dimethylates two adjacent adenosines (A1518 and A1519) in the loop of a conserved hairpin near the 3'-end of 16S rRNA in the 30S particle. May play a critical role in biogenesis of 30S subunits. The polypeptide is Ribosomal RNA small subunit methyltransferase A (Clostridium botulinum (strain Kyoto / Type A2)).